The sequence spans 673 residues: Zinc finger and BTB domain-containing protein 16 (673 aa).

In terms of domain architecture, BTB spans 34-96; it reads CDVVIMVDSQ…AYTATLQAKA (63 aa). A phosphoserine; by PDPK1 mark is found at Ser76, Ser184, and Ser197. Positions 200–300 are interaction with RUNX1T1; that stretch reads KAAVDSLMTI…SARELHYGRE (101 aa). 2 disordered regions span residues 215–236 and 249–332; these read QGTL…GRHP and DEVP…KHLG. The residue at position 256 (Ser256) is a Phosphoserine; by PDPK1. Thr282 bears the Phosphothreonine; by PDPK1 mark. 2 stretches are compositionally biased toward basic and acidic residues: residues 293-302 and 319-331; these read RELHYGREES and RPEH…EKHL. 8 consecutive C2H2-type zinc fingers follow at residues 404 to 426, 432 to 454, 461 to 483, 490 to 512, 518 to 540, 546 to 568, 574 to 596, and 602 to 624; these read EQCS…RKLH, YGCE…LLAH, FVCD…RQTH, VFCL…MEVH, YICS…LRSH, YECE…KRIH, YECN…YRVH, and FECK…LRTH. Position 628 is a phosphoserine; by PDPK1 (Ser628). A C2H2-type 9 zinc finger spans residues 630–652; the sequence is YQCTICTEYCPSLSSMQKHMKGH.

Belongs to the krueppel C2H2-type zinc-finger protein family. Binds EPN1. Interacts with ZBTB32 and CUL3. Interacts with ATP7B. Interacts with transcriptional corepressor RUNX1T1 (via its N-terminus); the interaction increases the transcription repression activity of ZBTB16. Interacts (via C2H2-type zinc finger domains 1 and 2) with RNF112. As to expression, within the hematopoietic system, PLZF is expressed in bone marrow, early myeloid cell lines and peripheral blood mononuclear cells. Also expressed in the ovary, and at lower levels, in the kidney and lung.

It localises to the nucleus. The protein localises to the nuclear body. It participates in protein modification; protein ubiquitination. Functionally, acts as a transcriptional repressor. Transcriptional repression may be mediated through recruitment of histone deacetylases to target promoters. May play a role in myeloid maturation and in the development and/or maintenance of other differentiated tissues. Probable substrate-recognition component of an E3 ubiquitin-protein ligase complex which mediates the ubiquitination and subsequent proteasomal degradation of target proteins. The protein is Zinc finger and BTB domain-containing protein 16 (ZBTB16) of Homo sapiens (Human).